Reading from the N-terminus, the 185-residue chain is Large ribosomal subunit protein uL5 (185 aa).

This sequence belongs to the universal ribosomal protein uL5 family. In terms of assembly, part of the 50S ribosomal subunit; part of the 5S rRNA/L5/L18/L25 subcomplex. Contacts the 5S rRNA and the P site tRNA. Forms a bridge to the 30S subunit in the 70S ribosome.

Functionally, this is one of the proteins that bind and probably mediate the attachment of the 5S RNA into the large ribosomal subunit, where it forms part of the central protuberance. In the 70S ribosome it contacts protein S13 of the 30S subunit (bridge B1b), connecting the 2 subunits; this bridge is implicated in subunit movement. Contacts the P site tRNA; the 5S rRNA and some of its associated proteins might help stabilize positioning of ribosome-bound tRNAs. This chain is Large ribosomal subunit protein uL5, found in Streptomyces griseus subsp. griseus (strain JCM 4626 / CBS 651.72 / NBRC 13350 / KCC S-0626 / ISP 5235).